Here is a 609-residue protein sequence, read N- to C-terminus: 2',5'-phosphodiesterase 12 (609 aa).

A mitochondrion-targeting transit peptide spans 1–42; it reads MWRLPGARAALRVIRTAVEKLSRAEAGSQTAAGAMERAVVRC. The span at 89 to 99 shows a compositional bias: basic residues; that stretch reads AAAAKKSRKSR. Disordered stretches follow at residues 89-111 and 206-230; these read AAAA…CSGP and AEPE…ETDV. Low complexity-rich tracts occupy residues 100-111 and 213-224; these read PNASGGAACSGP and PSSLSPSSPSSS. The residue at position 217 (Ser-217) is a Phosphoserine. Positions 351, 496, and 498 each coordinate Mg(2+). The active-site Proton donor/acceptor is the Asp-496.

This sequence belongs to the CCR4/nocturin family. Mg(2+) serves as cofactor. Ubiquitous.

It is found in the mitochondrion matrix. It catalyses the reaction Exonucleolytic cleavage of poly(A) to 5'-AMP.. Enzyme that cleaves 2',5'-phosphodiester bond linking adenosines of the 5'-triphosphorylated oligoadenylates, triphosphorylated oligoadenylates referred as 2-5A modulates the 2-5A system. Degrades triphosphorylated 2-5A to produce AMP and ATP. Also cleaves 3',5'-phosphodiester bond of oligoadenylates. Plays a role as a negative regulator of the 2-5A system that is one of the major pathways for antiviral and antitumor functions induced by interferons (IFNs). Suppression of this enzyme increases cellular 2-5A levels and decreases viral replication in cultured small-airway epithelial cells and Hela cells. In Homo sapiens (Human), this protein is 2',5'-phosphodiesterase 12 (PDE12).